Consider the following 258-residue polypeptide: Snake venom serine proteinase 5 (258 aa).

Positions 1 to 18 are cleaved as a signal peptide; it reads MVLIRVLANLLILQLSYA. A propeptide spanning residues 19-24 is cleaved from the precursor; sequence QKSSEL. The region spanning 25-249 is the Peptidase S1 domain; it reads VVGGDECNIN…YNDWIQSIIA (225 aa). Disulfide bonds link C31–C163, C50–C66, C98–C256, C142–C210, C174–C189, and C200–C225. An N-linked (GlcNAc...) asparagine glycan is attached at N44. Active-site charge relay system residues include H65 and D110. The Charge relay system role is filled by S204.

This sequence belongs to the peptidase S1 family. Snake venom subfamily. Monomer. As to expression, expressed by the venom gland.

It localises to the secreted. Functionally, snake venom serine protease that may act in the hemostasis system of the prey. The polypeptide is Snake venom serine proteinase 5 (Crotalus adamanteus (Eastern diamondback rattlesnake)).